The following is a 275-amino-acid chain: 2,3,4,5-tetrahydropyridine-2,6-dicarboxylate N-succinyltransferase (275 aa).

Residues arginine 104 and aspartate 141 each coordinate substrate.

The protein belongs to the transferase hexapeptide repeat family. Homotrimer.

The protein localises to the cytoplasm. It catalyses the reaction (S)-2,3,4,5-tetrahydrodipicolinate + succinyl-CoA + H2O = (S)-2-succinylamino-6-oxoheptanedioate + CoA. Its pathway is amino-acid biosynthesis; L-lysine biosynthesis via DAP pathway; LL-2,6-diaminopimelate from (S)-tetrahydrodipicolinate (succinylase route): step 1/3. This chain is 2,3,4,5-tetrahydropyridine-2,6-dicarboxylate N-succinyltransferase, found in Actinobacillus succinogenes (strain ATCC 55618 / DSM 22257 / CCUG 43843 / 130Z).